Here is a 798-residue protein sequence, read N- to C-terminus: Vacuolar protein sorting-associated protein 53 homolog (798 aa).

The protein belongs to the VPS53 family. Component of the Golgi-associated retrograde protein (GARP) complex, also called VFT (VPS fifty-three) complex, composed of vps-51, vps-52, vps-53 and vps-54. Within the complex interacts with vps-51, vps-52 and vps-54. In terms of tissue distribution, ubiquitously expressed, with particularly strong expression in neuronal cells. Specifically expressed in head and tail neurons and in the pharynx and ventral cord motor neurons.

The protein localises to the golgi apparatus. The protein resides in the trans-Golgi network membrane. Its subcellular location is the endosome membrane. It localises to the perikaryon. It is found in the cytoplasm. The protein localises to the perinuclear region. Acts as a component of the GARP complex that is involved in retrograde transport from early and late endosomes to the trans-Golgi network (TGN). The GARP complex facilitates tethering as well as SNARE complex assembly at the Golgi. Plays a role in the trafficking of cargo to dense-core vesicles, probably through association with the EARP-interacting protein eipr-1. Important for neuronal function. The polypeptide is Vacuolar protein sorting-associated protein 53 homolog (Caenorhabditis elegans).